A 100-amino-acid chain; its full sequence is Large ribosomal subunit protein uL23 (100 aa).

The protein belongs to the universal ribosomal protein uL23 family. In terms of assembly, part of the 50S ribosomal subunit. Contacts protein L29, and trigger factor when it is bound to the ribosome.

Its function is as follows. One of the early assembly proteins it binds 23S rRNA. One of the proteins that surrounds the polypeptide exit tunnel on the outside of the ribosome. Forms the main docking site for trigger factor binding to the ribosome. This chain is Large ribosomal subunit protein uL23, found in Mycobacterium ulcerans (strain Agy99).